The following is a 551-amino-acid chain: Glucans biosynthesis protein D (551 aa).

Residues 1–32 (MDRRRFIKGSMAMAAVCGTSGIASLFSQAAFA) constitute a signal peptide (tat-type signal).

Belongs to the OpgD/OpgG family. In terms of processing, predicted to be exported by the Tat system. The position of the signal peptide cleavage has not been experimentally proven.

The protein localises to the periplasm. It participates in glycan metabolism; osmoregulated periplasmic glucan (OPG) biosynthesis. In terms of biological role, probably involved in the control of the structural glucose backbone of osmoregulated periplasmic glucans (OPGs). In Shigella dysenteriae serotype 1 (strain Sd197), this protein is Glucans biosynthesis protein D.